Consider the following 355-residue polypeptide: Probable dual-specificity RNA methyltransferase RlmN (355 aa).

Glu-92 serves as the catalytic Proton acceptor. The region spanning Phe-98 to Arg-330 is the Radical SAM core domain. Residues Cys-105 and Cys-341 are joined by a disulfide bond. Residues Cys-112, Cys-116, and Cys-119 each contribute to the [4Fe-4S] cluster site. Residues Gly-164–Glu-165, Ser-196, Ser-219–His-221, and Asn-297 contribute to the S-adenosyl-L-methionine site. Residue Cys-341 is the S-methylcysteine intermediate of the active site.

Belongs to the radical SAM superfamily. RlmN family. It depends on [4Fe-4S] cluster as a cofactor.

Its subcellular location is the cytoplasm. The enzyme catalyses adenosine(2503) in 23S rRNA + 2 reduced [2Fe-2S]-[ferredoxin] + 2 S-adenosyl-L-methionine = 2-methyladenosine(2503) in 23S rRNA + 5'-deoxyadenosine + L-methionine + 2 oxidized [2Fe-2S]-[ferredoxin] + S-adenosyl-L-homocysteine. It catalyses the reaction adenosine(37) in tRNA + 2 reduced [2Fe-2S]-[ferredoxin] + 2 S-adenosyl-L-methionine = 2-methyladenosine(37) in tRNA + 5'-deoxyadenosine + L-methionine + 2 oxidized [2Fe-2S]-[ferredoxin] + S-adenosyl-L-homocysteine. Its function is as follows. Specifically methylates position 2 of adenine 2503 in 23S rRNA and position 2 of adenine 37 in tRNAs. In Oceanobacillus iheyensis (strain DSM 14371 / CIP 107618 / JCM 11309 / KCTC 3954 / HTE831), this protein is Probable dual-specificity RNA methyltransferase RlmN.